The following is a 327-amino-acid chain: Ribosomal RNA small subunit methyltransferase H (327 aa).

Residues 36 to 38, aspartate 55, leucine 89, aspartate 103, and glutamine 110 contribute to the S-adenosyl-L-methionine site; that span reads GGH. Residues 286 to 327 form a disordered region; the sequence is GAEPASDTEIEQNARAGSVRLRAAERTAAEPGRAHNPTGGVR.

The protein belongs to the methyltransferase superfamily. RsmH family.

The protein localises to the cytoplasm. The catalysed reaction is cytidine(1402) in 16S rRNA + S-adenosyl-L-methionine = N(4)-methylcytidine(1402) in 16S rRNA + S-adenosyl-L-homocysteine + H(+). In terms of biological role, specifically methylates the N4 position of cytidine in position 1402 (C1402) of 16S rRNA. This is Ribosomal RNA small subunit methyltransferase H from Parafrankia sp. (strain EAN1pec).